The sequence spans 426 residues: Glutamyl-tRNA reductase (426 aa).

Substrate-binding positions include 49 to 52 (TCNR), serine 107, 112 to 114 (EPQ), and glutamine 118. The active-site Nucleophile is cysteine 50. 187–192 (GAGETI) is a binding site for NADP(+).

The protein belongs to the glutamyl-tRNA reductase family. In terms of assembly, homodimer.

The enzyme catalyses (S)-4-amino-5-oxopentanoate + tRNA(Glu) + NADP(+) = L-glutamyl-tRNA(Glu) + NADPH + H(+). It participates in porphyrin-containing compound metabolism; protoporphyrin-IX biosynthesis; 5-aminolevulinate from L-glutamyl-tRNA(Glu): step 1/2. Its function is as follows. Catalyzes the NADPH-dependent reduction of glutamyl-tRNA(Glu) to glutamate 1-semialdehyde (GSA). This Ectopseudomonas mendocina (strain ymp) (Pseudomonas mendocina) protein is Glutamyl-tRNA reductase.